Consider the following 779-residue polypeptide: Potassium/sodium hyperpolarization-activated cyclic nucleotide-gated channel 3 (779 aa).

Positions 1–47 (MEEEARPAAGAGEAATPARETPPAAPAQARAASGGVPESAPEPKRRQ) are disordered. Residues 1-96 (MEEEARPAAG…PYSDFRFYWD (96 aa)) lie on the Cytoplasmic side of the membrane. Residues 7 to 32 (PAAGAGEAATPARETPPAAPAQARAA) are compositionally biased toward low complexity. An involved in subunit assembly region spans residues 45–90 (RRQLGTLLQPTVNKFSLRVFGSHKAVEIEQERVKSAGAWIIHPYSD). The helical transmembrane segment at 97-117 (LIMLLLMVGNLIVLPVGITFF) threads the bilayer. Residues 118–123 (KEENSP) lie on the Extracellular side of the membrane. Residues 124–144 (PWIVFNVLSDTFFLLDLVLNF) form a helical membrane-spanning segment. Residues 145 to 170 (RTGIVVEEGAEILLAPRAIRTRYLRT) lie on the Cytoplasmic side of the membrane. A helical transmembrane segment spans residues 171-191 (WFLVDLISSIPVDYIFLVVEL). The Extracellular portion of the chain corresponds to 192–200 (EPRLDAEVY). A helical; Voltage-sensor membrane pass occupies residues 201–221 (KTARALRIVRFTKILSLLRLL). The Cytoplasmic portion of the chain corresponds to 222 to 252 (RLSRLIRYIHQWEEIFHMTYDLASAVVRIFN). The chain crosses the membrane as a helical span at residues 253 to 273 (LIGMMLLLCHWDGCLQFLVPM). Topologically, residues 274-296 (LQDFPSDCWVSMNRMVNHSWGRQ) are extracellular. Asparagine 290 carries N-linked (GlcNAc...) asparagine glycosylation. The pore-forming intramembrane region spans 297 to 318 (YSHALFKAMSHMLCIGYGQQAP). The Extracellular segment spans residues 319–328 (VGMPDVWLTM). A helical membrane pass occupies residues 329-349 (LSMIVGATCYAMFIGHATALI). Residues 350 to 779 (QSLDSSRRQY…PRGPQISANM (430 aa)) lie on the Cytoplasmic side of the membrane. The segment at 353 to 779 (DSSRRQYQEK…PRGPQISANM (427 aa)) is interaction with KCTD3. 3',5'-cyclic AMP contacts are provided by glycine 491, glutamate 492, cysteine 494, arginine 501, threonine 502, arginine 542, and arginine 545. Positions 549-569 (KNSILQRKRSEPSPGSSGGVM) are disordered. Phosphoserine is present on serine 633. Polar residues predominate over residues 687–697 (SLSRTGRSQVS). Residues 687–779 (SLSRTGRSQV…PRGPQISANM (93 aa)) are disordered.

This sequence belongs to the potassium channel HCN family. In terms of assembly, homotetramer. The potassium channel is composed of a homo- or heterotetrameric complex of pore-forming subunits. Interacts with HCN1. Interacts with KCTD3; this interaction increases cell surface expression and current density of this channel. Interacts with PEX5L. In terms of tissue distribution, detected in hypothalamus, amygdala, olfactory bulb, hippocampus and retina (at protein level). Highly expressed in brain and heart, in particular in ventricle, atrium and in sinoatrial node (SAN). Detected at low levels in skeletal muscle and lung. Expressed in DRG neurons.

The protein resides in the cell membrane. It catalyses the reaction K(+)(in) = K(+)(out). It carries out the reaction Na(+)(in) = Na(+)(out). With respect to regulation, unlike HCN2 and HCN4, HCN3 is insensitive to cyclic nucleotides, such as cAMP or cGMP. This lack of sensitivity of HCN3, despite harboring a functional cyclic nucleotide-binding domain (CNBD), may be explained by its shorter C-terminal sequence, which may alter the normal autoinhibition of the channel. Inhibited by Cs(1+) and ivabradine. Phosphatidylinositol-4,5-bisphosphate (PIP(2)) shifts HCN3 activation to more depolarized potentials and accelerated activation kinetics. Its function is as follows. Hyperpolarization-activated ion channel that are permeable to sodium and potassium ions, with an about 3:1 preference for potassium ions. Contributes to the native pacemaker currents in heart (If) and in neurons (Ih). In particular, plays a pivotal role in maintaining excitability and promoting rhythmic burst firing within hypothalamic nuclei. Exerts a significant influence on the configuration of the cardiac action potential waveform. Does not appear to play a prominent role in the processing of acute, neuropathic, or inflammatory pain. The sequence is that of Potassium/sodium hyperpolarization-activated cyclic nucleotide-gated channel 3 (Hcn3) from Mus musculus (Mouse).